The chain runs to 65 residues: Large ribosomal subunit protein uL30 (65 aa).

It belongs to the universal ribosomal protein uL30 family. Part of the 50S ribosomal subunit.

The chain is Large ribosomal subunit protein uL30 from Chloroflexus aurantiacus (strain ATCC 29366 / DSM 635 / J-10-fl).